The primary structure comprises 197 residues: Nucleoside triphosphate pyrophosphatase (197 aa).

D74 acts as the Proton acceptor in catalysis.

Belongs to the Maf family. It depends on a divalent metal cation as a cofactor.

The protein localises to the cytoplasm. It carries out the reaction a ribonucleoside 5'-triphosphate + H2O = a ribonucleoside 5'-phosphate + diphosphate + H(+). The catalysed reaction is a 2'-deoxyribonucleoside 5'-triphosphate + H2O = a 2'-deoxyribonucleoside 5'-phosphate + diphosphate + H(+). Its function is as follows. Nucleoside triphosphate pyrophosphatase. May have a dual role in cell division arrest and in preventing the incorporation of modified nucleotides into cellular nucleic acids. The chain is Nucleoside triphosphate pyrophosphatase from Granulibacter bethesdensis (strain ATCC BAA-1260 / CGDNIH1).